Here is a 381-residue protein sequence, read N- to C-terminus: Flagellar P-ring protein (381 aa).

Residues 1 to 33 form the signal peptide; the sequence is MQFFNTLHPTRPHWLLAALCLIASLLGAGTAQA.

Belongs to the FlgI family. In terms of assembly, the basal body constitutes a major portion of the flagellar organelle and consists of four rings (L,P,S, and M) mounted on a central rod.

It localises to the periplasm. Its subcellular location is the bacterial flagellum basal body. In terms of biological role, assembles around the rod to form the L-ring and probably protects the motor/basal body from shearing forces during rotation. The chain is Flagellar P-ring protein from Albidiferax ferrireducens (strain ATCC BAA-621 / DSM 15236 / T118) (Rhodoferax ferrireducens).